Consider the following 238-residue polypeptide: Lactate utilization protein A (238 aa).

This sequence belongs to the LutA/YkgE family.

In terms of biological role, is involved in L-lactate degradation and allows cells to grow with lactate as the sole carbon source. The protein is Lactate utilization protein A of Anoxybacillus flavithermus (strain DSM 21510 / WK1).